The sequence spans 244 residues: Phosphoadenosine 5'-phosphosulfate reductase (244 aa).

The active-site Nucleophile; cysteine thiosulfonate intermediate is the cysteine 239.

It belongs to the PAPS reductase family. CysH subfamily.

It localises to the cytoplasm. It catalyses the reaction [thioredoxin]-disulfide + sulfite + adenosine 3',5'-bisphosphate + 2 H(+) = [thioredoxin]-dithiol + 3'-phosphoadenylyl sulfate. The protein operates within sulfur metabolism; hydrogen sulfide biosynthesis; sulfite from sulfate: step 3/3. In terms of biological role, catalyzes the formation of sulfite from phosphoadenosine 5'-phosphosulfate (PAPS) using thioredoxin as an electron donor. This Klebsiella pneumoniae subsp. pneumoniae (strain ATCC 700721 / MGH 78578) protein is Phosphoadenosine 5'-phosphosulfate reductase.